Reading from the N-terminus, the 583-residue chain is Aspartate--tRNA(Asp/Asn) ligase (583 aa).

An L-aspartate-binding site is contributed by Glu-173. The interval 197–200 (QMFK) is aspartate. Arg-219 serves as a coordination point for L-aspartate. ATP-binding positions include 219–221 (RDE) and Gln-228. His-447 serves as a coordination point for L-aspartate. Glu-481 contacts ATP. Arg-488 lines the L-aspartate pocket. 533 to 536 (GLDR) lines the ATP pocket.

The protein belongs to the class-II aminoacyl-tRNA synthetase family. Type 1 subfamily. Homodimer.

It is found in the cytoplasm. It carries out the reaction tRNA(Asx) + L-aspartate + ATP = L-aspartyl-tRNA(Asx) + AMP + diphosphate. Aspartyl-tRNA synthetase with relaxed tRNA specificity since it is able to aspartylate not only its cognate tRNA(Asp) but also tRNA(Asn). Reaction proceeds in two steps: L-aspartate is first activated by ATP to form Asp-AMP and then transferred to the acceptor end of tRNA(Asp/Asn). The protein is Aspartate--tRNA(Asp/Asn) ligase of Elusimicrobium minutum (strain Pei191).